An 856-amino-acid polypeptide reads, in one-letter code: DNA mismatch repair protein MutS (856 aa).

607-614 is an ATP binding site; sequence GPNMAGKS.

This sequence belongs to the DNA mismatch repair MutS family.

In terms of biological role, this protein is involved in the repair of mismatches in DNA. It is possible that it carries out the mismatch recognition step. This protein has a weak ATPase activity. This Cytophaga hutchinsonii (strain ATCC 33406 / DSM 1761 / CIP 103989 / NBRC 15051 / NCIMB 9469 / D465) protein is DNA mismatch repair protein MutS.